A 911-amino-acid polypeptide reads, in one-letter code: DNA mismatch repair protein MutS (911 aa).

Residues 1-10 (MDNKTDHKND) show a composition bias toward basic and acidic residues. The interval 1–24 (MDNKTDHKNDLNSQPVPSSAPHKE) is disordered. 662-669 (GPNMGGKS) contributes to the ATP binding site.

The protein belongs to the DNA mismatch repair MutS family.

In terms of biological role, this protein is involved in the repair of mismatches in DNA. It is possible that it carries out the mismatch recognition step. This protein has a weak ATPase activity. In Bartonella quintana (strain Toulouse) (Rochalimaea quintana), this protein is DNA mismatch repair protein MutS.